The chain runs to 258 residues: tRNA pseudouridine synthase A (258 aa).

Asp54 serves as the catalytic Nucleophile. Tyr112 serves as a coordination point for substrate.

The protein belongs to the tRNA pseudouridine synthase TruA family. Homodimer.

It catalyses the reaction uridine(38/39/40) in tRNA = pseudouridine(38/39/40) in tRNA. Its function is as follows. Formation of pseudouridine at positions 38, 39 and 40 in the anticodon stem and loop of transfer RNAs. The chain is tRNA pseudouridine synthase A from Geobacillus kaustophilus (strain HTA426).